Reading from the N-terminus, the 227-residue chain is Myogenin (227 aa).

The 52-residue stretch at 82-133 folds into the bHLH domain; sequence DRRRAATLREKRRLKKVNEAFEALKRSTLLNPNQRLPKVEILRSAIQYIERL. The interval 147–196 is disordered; sequence QRELRYRPAAPQPAAPSECGSGSSSCSPEWSTQLEFGTNPADHLLSDDQA. Low complexity predominate over residues 161-175; the sequence is APSECGSGSSSCSPE.

As to quaternary structure, homodimer and heterodimer. Efficient DNA binding requires dimerization with another bHLH protein.

The protein resides in the nucleus. Acts as a transcriptional activator that promotes transcription of muscle-specific target genes and plays a role in muscle differentiation. Induces fibroblasts to differentiate into myoblasts. Probable sequence specific DNA-binding protein. This Gallus gallus (Chicken) protein is Myogenin (MYOG).